The chain runs to 454 residues: Protein translocase subunit SecY (454 aa).

The next 10 membrane-spanning stretches (helical) occupy residues 43 to 63 (LTIALLVFIIKIGMAIPLPYI), 97 to 117 (FTLGITPSINASIILQLAFVI), 144 to 164 (TLLLAITQSVFLIFSLRAFIF), 168 to 188 (ILKLFELSCVLSSGAMIILWI), 201 to 221 (SSFLIFLNIVSVLPEQIGMSF), 226 to 246 (IFSFEGLIVILTFSITVWAAI), 289 to 309 (PVVFASYLIPILKTGGIYILL), 334 to 354 (IVEAGLICLFALFYSGLIIDP), 390 to 410 (LIGALILAFNVVLLNLVGFVF), and 414 to 434 (IFKGFSIGSQIILLGVVTEIL).

This sequence belongs to the SecY/SEC61-alpha family. As to quaternary structure, component of the plastid Sec protein translocase complex, which is composed of at least SecY and SecE.

It localises to the plastid. Its subcellular location is the chloroplast thylakoid membrane. In terms of biological role, the central subunit of the protein translocation channel SecYE. Consists of two halves formed by TMs 1-5 and 6-10. These two domains form a lateral gate at the front which open onto the bilayer between TMs 2 and 7, and are clamped together by SecE at the back. The channel is closed by both a pore ring composed of hydrophobic SecY resides and a short helix (helix 2A) on the extracellular side of the membrane which forms a plug. The protein is Protein translocase subunit SecY of Heterosigma akashiwo (strain NIES-293 / 8280G21-1).